A 105-amino-acid chain; its full sequence is Large ribosomal subunit protein eL30 (105 aa).

The protein belongs to the eukaryotic ribosomal protein eL30 family.

The chain is Large ribosomal subunit protein eL30 (RPL30) from Trypanosoma brucei brucei.